The primary structure comprises 385 residues: ELAV-like protein 4 (385 aa).

Residues 12 to 48 (TMEPQVSNGPTSNTSNGPSSNNRNCPSPMQTGATTDD) are disordered. Positions 18–33 (SNGPTSNTSNGPSSNN) are enriched in low complexity. A compositionally biased stretch (polar residues) spans 34–48 (RNCPSPMQTGATTDD). Phosphoserine is present on Ser-38. RRM domains lie at 51 to 129 (TNLI…YARP) and 137 to 217 (ANLY…FANN). A Phosphoserine modification is found at Ser-233. Residue Arg-248 is modified to Asymmetric dimethylarginine; by CARM1; alternate. Arg-248 is modified (omega-N-methylarginine; by CARM1; alternate). In terms of domain architecture, RRM 3 spans 302 to 380 (WCIFVYNLSP…RVLQVSFKTN (79 aa)).

Belongs to the RRM elav family. In terms of assembly, component of a TAU mRNP complex, at least composed of IGF2BP1, ELAVL4 and G3BP. Associates with the EIF4F cap-binding complex, composed of EIF4G, EIF4A, EIF4E and PABP. Within the EIF4F cap-binding complex, interacts with EIF4A. Interacts with SMN (via Tudor domain) in an RNA-independent manner; the interaction is required for localization of ELAVL4 to RNA granules. Interacts with MAP1 light chain LC1 (via C-terminus); the interaction contributes to the association of ELAVL4 with microtubules. Interacts with MAP1 light chain LC2. Post-translationally, methylated by CARM1, which leads to reduced RNA-binding activity and enhanced interaction with SMN. Methylation at Arg-248 by CARM1 weakens protective binding to the 3'UTR of CDKN1A mRNA and down-regulates CDKN1A protein expression, thereby maintaining cells in a proliferative state. Methylation is inhibited by NGF, which facilitates neurite outgrowth. Expressed in pancreatic beta cells (at protein level). Expressed in the brain.

It is found in the cytoplasm. It localises to the perikaryon. Its subcellular location is the cell projection. The protein localises to the dendrite. The protein resides in the axon. It is found in the growth cone. Its function is as follows. RNA-binding protein that is involved in the post-transcriptional regulation of mRNAs. Plays a role in the regulation of mRNA stability, alternative splicing and translation. Binds to AU-rich element (ARE) sequences in the 3' untranslated region (UTR) of target mRNAs, including GAP43, VEGF, FOS, CDKN1A and ACHE mRNA. Many of the target mRNAs are coding for RNA-binding proteins, transcription factors and proteins involved in RNA processing and/or neuronal development and function. By binding to the mRNA 3'UTR, decreases mRNA deadenylation and thereby contributes to the stabilization of mRNA molecules and their protection from decay. Also binds to the polyadenylated (poly(A)) tail in the 3'UTR of mRNA, thereby increasing its affinity for mRNA binding. Mainly plays a role in neuron-specific RNA processing by stabilization of mRNAs such as GAP43, ACHE and mRNAs of other neuronal proteins, thereby contributing to the differentiation of neural progenitor cells, nervous system development, learning and memory mechanisms. Involved in the negative regulation of the proliferative activity of neuronal stem cells and in the positive regulation of neuronal differentiation of neural progenitor cells. Promotes neuronal differentiation of neural stem/progenitor cells in the adult subventricular zone of the hippocampus by binding to and stabilizing SATB1 mRNA. Binds and stabilizes MSI1 mRNA in neural stem cells. Exhibits increased binding to ACHE mRNA during neuronal differentiation, thereby stabilizing ACHE mRNA and enhancing its expression. Protects CDKN1A mRNA from decay by binding to its 3'-UTR. May bind to APP and BACE1 mRNAS and the BACE1AS lncRNA and enhance their stabilization. Plays a role in neurite outgrowth and in the establishment and maturation of dendritic arbors, thereby contributing to neocortical and hippocampal circuitry function. Stabilizes GAP43 mRNA and protects it from decay during postembryonic development in the brain. By promoting the stabilization of GAP43 mRNA, plays a role in NGF-mediated neurite outgrowth. Binds to BDNF long 3'UTR mRNA, thereby leading to its stabilization and increased dendritic translation after activation of PKC. By increasing translation of BDNF after nerve injury, may contribute to nerve regeneration. Acts as a stabilizing factor by binding to the 3'UTR of NOVA1 mRNA, thereby increasing its translation and enhancing its functional activity in neuron-specific splicing. Stimulates translation of mRNA in a poly(A)- and cap-dependent manner, possibly by associating with the EIF4F cap-binding complex. May also negatively regulate translation by binding to the 5'UTR of Ins2 mRNA, thereby repressing its translation. Upon glucose stimulation, Ins2 mRNA is released from ELAVL4 and translational inhibition is abolished. Also plays a role in the regulation of alternative splicing. May regulate alternative splicing of CALCA pre-mRNA into Calcitonin and Calcitonin gene-related peptide 1 (CGRP) by competing with splicing regulator TIAR for binding to U-rich intronic sequences of CALCA pre-mRNA. This chain is ELAV-like protein 4 (ELAVL4), found in Homo sapiens (Human).